Reading from the N-terminus, the 305-residue chain is Homoserine kinase (305 aa).

Position 93 to 103 (93 to 103) interacts with ATP; the sequence is PLARGLGSSAT.

The protein belongs to the GHMP kinase family. Homoserine kinase subfamily.

Its subcellular location is the cytoplasm. The enzyme catalyses L-homoserine + ATP = O-phospho-L-homoserine + ADP + H(+). It functions in the pathway amino-acid biosynthesis; L-threonine biosynthesis; L-threonine from L-aspartate: step 4/5. In terms of biological role, catalyzes the ATP-dependent phosphorylation of L-homoserine to L-homoserine phosphate. The chain is Homoserine kinase from Trichodesmium erythraeum (strain IMS101).